Reading from the N-terminus, the 1003-residue chain is Anoctamin-2 (1003 aa).

Residues 1–68 are disordered; that stretch reads MATPGPRDIP…PCGGESTRSS (68 aa). Residues 1-365 are Cytoplasmic-facing; it reads MATPGPRDIP…FGEKIGLYFA (365 aa). Residues 10–21 are compositionally biased toward low complexity; the sequence is PLLPGSPRRLSP. Residues 366–386 traverse the membrane as a helical segment; it reads WLGLYTSFLIPSSVIGVIVFL. Residues 387–434 lie on the Extracellular side of the membrane; the sequence is YGCATIEEDIPSREMCDQQNAFTMCPLCDKSCDYWNLSSACGTAQASH. Asn422 carries N-linked (GlcNAc...) asparagine glycosylation. The chain crosses the membrane as a helical span at residues 435 to 455; the sequence is LFDNPATVFFSIFMALWATMF. Over 456-538 the chain is Cytoplasmic; the sequence is LENWKRLQMR…KDRFPGYLMN (83 aa). Residues 539-559 traverse the membrane as a helical segment; that stretch reads FASILFMIALTFSIVFGVIVY. Topologically, residues 560 to 582 are extracellular; sequence RITTAAALSLNKATRSNVRVTVT. The helical transmembrane segment at 583-603 threads the bilayer; it reads ATAVIINLVVILILDEIYGAV. At 604 to 623 the chain is on the cytoplasmic side; the sequence is AKWLTKIEVPKTEQTFEERL. The helical transmembrane segment at 624 to 644 threads the bilayer; that stretch reads ILKAFLLKFVNAYSPIFYVAF. Topologically, residues 645–748 are extracellular; it reads FKGRFVGRPG…YTGLTPEYME (104 aa). The helical transmembrane segment at 749–769 threads the bilayer; it reads MIIQFGFVTLFVASFPLAPVF. Residues 770-801 are Cytoplasmic-facing; that stretch reads ALLNNVIEVRLDAKKFVTELRRPDAVRTKDIG. The chain crosses the membrane as a helical span at residues 802–822; the sequence is IWFDILSGIGKFSVISNAFVI. Over 823–907 the chain is Extracellular; that stretch reads AITSDFIPRL…QYWFILSARL (85 aa). Asn841, Asn849, and Asn856 each carry an N-linked (GlcNAc...) asparagine glycan. The helical transmembrane segment at 908 to 928 threads the bilayer; the sequence is AFVIIFQNLVMFLSVLVDWMI. Topologically, residues 929–1003 are cytoplasmic; it reads PDIPTDISDQ…MSSGSQHTNV (75 aa). Residues 961–1003 are disordered; sequence MDEPALRSPGGGDRSRSRAASSAPSGQSQLGSMMSSGSQHTNV. The segment covering 978–1003 has biased composition (low complexity); the sequence is RAASSAPSGQSQLGSMMSSGSQHTNV. Positions 1001–1003 match the DLG4 binding (PDZ) motif; it reads TNV.

This sequence belongs to the anoctamin family. In terms of assembly, homodimer. Component of a presynaptic protein complex recruited to specialized plasma membrane domains of photoreceptors. Interacts with DLG4 by its C-terminal region. As to expression, retina, especially in the photoreceptor synaptic terminals.

It is found in the cell membrane. It carries out the reaction chloride(in) = chloride(out). Channel activity is repressed by chloride inhibitors; strongly by niflumic acid (NFA), partially by flufenamic acid (FFA), and only slightly by meclofenamic acid (MFA), 5-Nitro-2-(3-phenylpropylamino)benzoic acid (NPPB), 4-acetamido-4'-isothiocyanato-stilben-2,2'-disulfonate (SITS), and 4,4'-diisothiocyanatostilbene-2,2'-disulfonic acid (DIDS). In terms of biological role, calcium-activated chloride channel (CaCC) which may play a role in olfactory signal transduction. Odorant molecules bind to odor-sensing receptors (OSRs), leading to an increase in calcium entry that activates CaCC current which amplifies the depolarization of the OSR cells, ANO2 seems to be the underlying chloride channel involved in this process. May mediate light perception amplification in retina. This is Anoctamin-2 (ANO2) from Homo sapiens (Human).